Consider the following 181-residue polypeptide: MVKETIPKEGENIKIQSYKHDGNIHRVWSETTILKGTDHVVIGGNDHTLVTESDGRTWITREPAIVYFHSEYWFNVICMFREDGVYYYCNLSSPFVCDDEALKYIDYDLDVKVYPNGKYHLLDEDEYQQHMQQMNYPKDIDVILRRNVDILQQWIEQKKGPFAPDFIKVWRERYKKLRQKS.

R26 acts as the Proton donor in catalysis. Mg(2+) is bound by residues N90, D106, D108, D110, D123, and E126.

This sequence belongs to the Ntdp family. It depends on Mg(2+) as a cofactor.

The catalysed reaction is a ribonucleoside 5'-triphosphate + H2O = a ribonucleoside 5'-diphosphate + phosphate + H(+). It carries out the reaction a ribonucleoside 5'-diphosphate + H2O = a ribonucleoside 5'-phosphate + phosphate + H(+). Has nucleoside phosphatase activity towards nucleoside triphosphates and nucleoside diphosphates. The sequence is that of Nucleoside triphosphate/diphosphate phosphatase from Staphylococcus carnosus (strain TM300).